The primary structure comprises 178 residues: Protein FLOWERING LOCUS T 1 (178 aa).

The protein belongs to the phosphatidylethanolamine-binding protein family. As to expression, expressed in leaves but not in shoot apex.

Its function is as follows. Involved in the regulation of vernalization and of flowering time. This Brachypodium distachyon (Purple false brome) protein is Protein FLOWERING LOCUS T 1.